Here is a 625-residue protein sequence, read N- to C-terminus: Probable potassium transport system protein Kup (625 aa).

12 helical membrane passes run 13–33 (TALAALGVVFGDIGTSPLYAL), 53–73 (ILSIIFWCLMLIISIKYVAIV), 103–123 (IYMIAIGFIGASLFFGDGIIT), 141–161 (VFDPFIMPIAIAIIVTLFLVQ), 172–192 (FGPITLVWFLSLGILGIHSVI), 206–226 (AIQFIYHHPIMTFFVMGAVVL), 250–270 (WFFVVLPCLVLNYAGQGALLL), 282–302 (LLVPQWALYPMIIMATMATVI), 340–360 (IYVPFLNWLLLIAIIILILIF), 369–389 (AYGLAVTLTMLCDTILVAVFI), 400–420 (VLLLIIPFFILESVLVGATSL), and 422–442 (ILSGGWVPLLIGAIAVTILMT).

It belongs to the HAK/KUP transporter (TC 2.A.72) family.

The protein resides in the cell inner membrane. The enzyme catalyses K(+)(in) + H(+)(in) = K(+)(out) + H(+)(out). In terms of biological role, transport of potassium into the cell. Likely operates as a K(+):H(+) symporter. The chain is Probable potassium transport system protein Kup from Acinetobacter baumannii (strain AYE).